Reading from the N-terminus, the 545-residue chain is T-box transcription factor TBX4 (545 aa).

A DNA-binding region (T-box) is located at residues 71–251; that stretch reads LHEKELWKKF…NNPFAKGFRG (181 aa). The disordered stretch occupies residues 479 to 509; it reads QSQVRERGPSASFPRERGLPQGCERKPPSPH. Basic and acidic residues predominate over residues 482–505; that stretch reads VRERGPSASFPRERGLPQGCERKP. Residue serine 507 is modified to Phosphoserine.

The protein resides in the nucleus. In terms of biological role, transcriptional regulator that has an essential role in the organogenesis of lungs, pelvis, and hindlimbs. The chain is T-box transcription factor TBX4 (TBX4) from Homo sapiens (Human).